A 386-amino-acid chain; its full sequence is Caspase-12 (386 aa).

In terms of domain architecture, CARD spans 1–91; the sequence is MAGKRQSQDP…LLSLKSHAEN (91 aa). Residue serine 84 is modified to Phosphoserine. Active-site residues include histidine 218 and cysteine 266.

It belongs to the peptidase C14A family. Heterotetramer that consists of two anti-parallel arranged heterodimers, each one formed by two subunits (Potential). May interact with TRAF2.

In terms of biological role, involved in the activation cascade of caspases responsible for apoptosis execution. This chain is Caspase-12, found in Canis lupus familiaris (Dog).